Here is a 160-residue protein sequence, read N- to C-terminus: Transcription elongation factor GreA (160 aa).

Residues 3 to 84 (NIVDDKILLT…SKAKIIKADL (82 aa)) are a coiled coil.

Belongs to the GreA/GreB family.

Necessary for efficient RNA polymerase transcription elongation past template-encoded arresting sites. The arresting sites in DNA have the property of trapping a certain fraction of elongating RNA polymerases that pass through, resulting in locked ternary complexes. Cleavage of the nascent transcript by cleavage factors such as GreA or GreB allows the resumption of elongation from the new 3'terminus. GreA releases sequences of 2 to 3 nucleotides. This Mesomycoplasma hyopneumoniae (strain J / ATCC 25934 / NCTC 10110) (Mycoplasma hyopneumoniae) protein is Transcription elongation factor GreA.